Reading from the N-terminus, the 249-residue chain is MSVQREDVDIKLIAIDMDGTLLNDEQLISDENRKAIREAEDKGVYVVISTGRTLMTCRELAESLKLSSFLITANGSEIWDSNFNLVERKLLHTDHIQMMWDLRNKHNTNFWASTVNKVWRGEFPENITDHEWLKFGFDIEDDDIRNEVLEELRKNKELEITNSSPTNIEVNALGINKAAALAKVTEKLGFTMENVMAMGDSLNDIAMIKEAGLGVAMGNAQDIVKETADYITDTNIEDGVAKAIRHWVL.

The Nucleophile role is filled by aspartate 16. Mg(2+) is bound at residue aspartate 16. Residue methionine 17 coordinates phosphate. A Mg(2+)-binding site is contributed by aspartate 18. Residues 50 to 51 (TG) and lysine 177 each bind phosphate. Mg(2+)-binding residues include aspartate 200 and serine 201. Asparagine 203 is a binding site for phosphate.

The protein belongs to the HAD-like hydrolase superfamily. Cof family. It depends on Mg(2+) as a cofactor.

It carries out the reaction 5-amino-6-(5-phospho-D-ribitylamino)uracil + H2O = 5-amino-6-(D-ribitylamino)uracil + phosphate. Its pathway is cofactor biosynthesis; riboflavin biosynthesis; 5-amino-6-(D-ribitylamino)uracil from GTP: step 4/4. Catalyzes the dephosphorylation of the riboflavin precursor 5-amino-6-(5-phospho-D-ribitylamino)uracil and of flavin mononucleotide (FMN) in vitro. To a lesser extent, may also catalyze the dephosphorylation of a broad range of substrates such as phosphorylated sugars and triphosphate nucleotides in vitro. The polypeptide is 5-amino-6-(5-phospho-D-ribitylamino)uracil phosphatase YcsE (ycsE) (Bacillus subtilis (strain 168)).